Here is a 727-residue protein sequence, read N- to C-terminus: Transcription activator of gluconeogenesis TRV_01442 (727 aa).

Residues 1–32 (MSPHQTTGQESDNMTVNGENAQASSQYIQSNE) are compositionally biased toward polar residues. Positions 1–62 (MSPHQTTGQE…PSRPKRKKAK (62 aa)) are disordered. Residues 39-55 (ATEKKASAAKAAKDPSR) show a composition bias toward basic and acidic residues. Positions 65-93 (CYACQRGHLTCGDERPCQRCIKRGFQDAC) form a DNA-binding region, zn(2)-C6 fungal-type. Composition is skewed to polar residues over residues 129–213 (NNVN…TPSA), 267–277 (PSDSGAQRGSI), and 361–379 (MMTT…GAFN). 5 disordered regions span residues 129–224 (NNVN…FNST), 264–297 (DTPP…ESPS), 353–399 (SPAS…STPQ), 533–567 (NHNV…YNSS), and 627–666 (GSNG…QRRW). Low complexity-rich tracts occupy residues 380–399 (SRQN…STPQ) and 543–553 (GLMTGSTSRGS). Residues 639–661 (EATSNETNELNGSHTNGATTNGR) show a composition bias toward polar residues.

It belongs to the ERT1/acuK family.

The protein localises to the nucleus. Its function is as follows. Transcription factor which regulates nonfermentable carbon utilization. Activator of gluconeogenetic genes. The chain is Transcription activator of gluconeogenesis TRV_01442 from Trichophyton verrucosum (strain HKI 0517).